Consider the following 281-residue polypeptide: Diaminopimelate epimerase (281 aa).

Substrate is bound by residues Asn-13 and Asn-66. Cys-75 functions as the Proton donor in the catalytic mechanism. Substrate-binding positions include 76–77 (GN), Asn-164, Asn-197, and 215–216 (ER). Residue Cys-224 is the Proton acceptor of the active site. 225–226 (GT) provides a ligand contact to substrate.

It belongs to the diaminopimelate epimerase family. As to quaternary structure, homodimer.

It localises to the cytoplasm. The catalysed reaction is (2S,6S)-2,6-diaminopimelate = meso-2,6-diaminopimelate. The protein operates within amino-acid biosynthesis; L-lysine biosynthesis via DAP pathway; DL-2,6-diaminopimelate from LL-2,6-diaminopimelate: step 1/1. Its function is as follows. Catalyzes the stereoinversion of LL-2,6-diaminopimelate (L,L-DAP) to meso-diaminopimelate (meso-DAP), a precursor of L-lysine and an essential component of the bacterial peptidoglycan. This chain is Diaminopimelate epimerase, found in Microcystis aeruginosa (strain NIES-843 / IAM M-2473).